Consider the following 290-residue polypeptide: 4-hydroxy-3-methylbut-2-enyl diphosphate reductase (290 aa).

Position 13 (Cys13) interacts with [4Fe-4S] cluster. His41 and His75 together coordinate (2E)-4-hydroxy-3-methylbut-2-enyl diphosphate. Dimethylallyl diphosphate is bound by residues His41 and His75. The isopentenyl diphosphate site is built by His41 and His75. A [4Fe-4S] cluster-binding site is contributed by Cys97. His129 contacts (2E)-4-hydroxy-3-methylbut-2-enyl diphosphate. His129 contributes to the dimethylallyl diphosphate binding site. His129 provides a ligand contact to isopentenyl diphosphate. Glu131 functions as the Proton donor in the catalytic mechanism. Thr167 provides a ligand contact to (2E)-4-hydroxy-3-methylbut-2-enyl diphosphate. Residue Cys198 participates in [4Fe-4S] cluster binding. (2E)-4-hydroxy-3-methylbut-2-enyl diphosphate is bound by residues Ser226, Ser227, Asn228, and Ser270. Positions 226, 227, 228, and 270 each coordinate dimethylallyl diphosphate. Ser226, Ser227, Asn228, and Ser270 together coordinate isopentenyl diphosphate.

It belongs to the IspH family. [4Fe-4S] cluster serves as cofactor.

It carries out the reaction isopentenyl diphosphate + 2 oxidized [2Fe-2S]-[ferredoxin] + H2O = (2E)-4-hydroxy-3-methylbut-2-enyl diphosphate + 2 reduced [2Fe-2S]-[ferredoxin] + 2 H(+). It catalyses the reaction dimethylallyl diphosphate + 2 oxidized [2Fe-2S]-[ferredoxin] + H2O = (2E)-4-hydroxy-3-methylbut-2-enyl diphosphate + 2 reduced [2Fe-2S]-[ferredoxin] + 2 H(+). It participates in isoprenoid biosynthesis; dimethylallyl diphosphate biosynthesis; dimethylallyl diphosphate from (2E)-4-hydroxy-3-methylbutenyl diphosphate: step 1/1. It functions in the pathway isoprenoid biosynthesis; isopentenyl diphosphate biosynthesis via DXP pathway; isopentenyl diphosphate from 1-deoxy-D-xylulose 5-phosphate: step 6/6. Catalyzes the conversion of 1-hydroxy-2-methyl-2-(E)-butenyl 4-diphosphate (HMBPP) into a mixture of isopentenyl diphosphate (IPP) and dimethylallyl diphosphate (DMAPP). Acts in the terminal step of the DOXP/MEP pathway for isoprenoid precursor biosynthesis. This is 4-hydroxy-3-methylbut-2-enyl diphosphate reductase from Parabacteroides distasonis (strain ATCC 8503 / DSM 20701 / CIP 104284 / JCM 5825 / NCTC 11152).